We begin with the raw amino-acid sequence, 168 residues long: RNA pyrophosphohydrolase (168 aa).

A Nudix hydrolase domain is found at 8–160 (PYRPCVGLAI…KRQVYERVAR (153 aa)). Residues 47 to 68 (GGIDKGEEPYEAALRELYEETS) carry the Nudix box motif.

It belongs to the Nudix hydrolase family. RppH subfamily. A divalent metal cation is required as a cofactor.

In terms of biological role, accelerates the degradation of transcripts by removing pyrophosphate from the 5'-end of triphosphorylated RNA, leading to a more labile monophosphorylated state that can stimulate subsequent ribonuclease cleavage. The sequence is that of RNA pyrophosphohydrolase from Azorhizobium caulinodans (strain ATCC 43989 / DSM 5975 / JCM 20966 / LMG 6465 / NBRC 14845 / NCIMB 13405 / ORS 571).